A 651-amino-acid chain; its full sequence is Probable potassium transport system protein Kup (651 aa).

12 consecutive transmembrane segments (helical) span residues 41–61 (LVLGALGVVYGDIGTSPIYAF), 82–102 (VVSLIFWALTLVVTIKYVLFV), 130–150 (LILGVGICGAALFFGDAVITP), 163–183 (IVAPDLTPFVVPITVVILVTL), 194–214 (VAIVFGPIMALWFLALGASGL), 235–255 (FLMISPGIAFITVGAVFLAMT), 276–296 (WLWIVFPCLLLNYFGQAAFIL), 309–329 (MMPSFALLPMVLLATAATVIA), 366–386 (IYIPRVNLLLGLAVVILVLGF), 395–415 (AYGIAVTGNMLVTTVLLYIVM), 426–446 (ALPIIVGFLIIDIMFFGANII), and 450–470 (EGGWASIGIAAILVLIMWTWV).

Belongs to the HAK/KUP transporter (TC 2.A.72) family.

The protein resides in the cell inner membrane. It carries out the reaction K(+)(in) + H(+)(in) = K(+)(out) + H(+)(out). Its function is as follows. Transport of potassium into the cell. Likely operates as a K(+):H(+) symporter. The chain is Probable potassium transport system protein Kup from Brucella anthropi (strain ATCC 49188 / DSM 6882 / CCUG 24695 / JCM 21032 / LMG 3331 / NBRC 15819 / NCTC 12168 / Alc 37) (Ochrobactrum anthropi).